The sequence spans 427 residues: Dihydroorotase (427 aa).

Residues His-60 and His-62 each contribute to the Zn(2+) site. Substrate is bound by residues 62–64 (HLR) and Asn-94. Residues Asp-151, His-178, and His-231 each coordinate Zn(2+). Residue Asn-277 participates in substrate binding. Asp-304 contacts Zn(2+). Asp-304 is an active-site residue. Substrate contacts are provided by residues His-308 and 322–323 (FG).

Belongs to the metallo-dependent hydrolases superfamily. DHOase family. Class I DHOase subfamily. Zn(2+) serves as cofactor.

It catalyses the reaction (S)-dihydroorotate + H2O = N-carbamoyl-L-aspartate + H(+). It functions in the pathway pyrimidine metabolism; UMP biosynthesis via de novo pathway; (S)-dihydroorotate from bicarbonate: step 3/3. Catalyzes the reversible cyclization of carbamoyl aspartate to dihydroorotate. The polypeptide is Dihydroorotase (Pelotomaculum thermopropionicum (strain DSM 13744 / JCM 10971 / SI)).